The chain runs to 470 residues: Cannabinoid receptor 1 (470 aa).

Residues 1–121 (MKSILDGLAD…TPSQQLVIAA (121 aa)) are Extracellular-facing. Positions 2–23 (KSILDGLADTTFRTITTDLLYL) are required for mitochondrial localization. Residues asparagine 78 and asparagine 84 are each glycosylated (N-linked (GlcNAc...) asparagine). Residues 122 to 142 (LSIILGTFTVLENMLVLVVIV) form a helical membrane-spanning segment. The Cytoplasmic segment spans residues 143-154 (QSRSLRCRPSYH). Residues 155–175 (FIGSLAVADLLGSVIFVYSFV) form a helical membrane-spanning segment. Residues 176 to 187 (DFHVFHRKDSPN) lie on the Extracellular side of the membrane. Residues 188–208 (VFLFKLGGVTASFTASVGSLF) form a helical membrane-spanning segment. Residues 209-232 (LTAIDRYISIHRPMSYKRIVTRTK) are Cytoplasmic-facing. The chain crosses the membrane as a helical span at residues 233 to 253 (AVIAFCMMWTIAIVIAVLPLF). At 254–277 (GWNCIKLRSVCSDIFPLIDETYLM) the chain is on the extracellular side. Residues 278–298 (FWIGVTSVLLLFIVYAYMYIL) traverse the membrane as a helical segment. Residues 299–344 (WKAHNHAVRMLQRGTQKSIIVHTSEDGKVHITRPDQTRMDIRLAKT) lie on the Cytoplasmic side of the membrane. The chain crosses the membrane as a helical span at residues 345–365 (LVLILVVLIICWGPLMAIMVY). The Extracellular portion of the chain corresponds to 366-377 (DVFGKINKTIKT). N-linked (GlcNAc...) asparagine glycosylation occurs at asparagine 372. The helical transmembrane segment at 378–398 (VFAFCSVLCLLNSTVNPIIYA) threads the bilayer. Residues 399–470 (LRSKDLRNAF…VSTDTSAEAV (72 aa)) are Cytoplasmic-facing. Cysteine 415 carries S-palmitoyl cysteine lipidation.

It belongs to the G-protein coupled receptor 1 family. Palmitoylation at Cys-415 is important for recruitment at both plasma membrane and lipid rafts and association with G protein alpha subunits. As to expression, expressed in neurons, especially in the olfactory bulbs, telencephalic pallium, and hypothalamus and also in the midbrain and hindbrain (in the mesencephalic tegmentum and dorsolateral rhombencephalon). Expressed also in the spinal cord.

The protein localises to the cell membrane. Its subcellular location is the mitochondrion outer membrane. It localises to the cell projection. It is found in the axon. The protein resides in the presynapse. In terms of biological role, G-protein coupled receptor for cannabinoids. Mediates many cannabinoid-induced effects in the central nervous system (CNS), as well as in peripheral tissues. Regulates cellular respiration and energy production in response to cannabinoids. Signaling typically involves reduction in cyclic AMP. This Xenopus laevis (African clawed frog) protein is Cannabinoid receptor 1 (cnr1).